Reading from the N-terminus, the 373-residue chain is Dimethylallyltryptophan synthase CymD (373 aa).

L-tryptophan is bound by residues Asp-55, Val-56, and Glu-64. Residue Glu-64 is the Nucleophile of the active site. 5 residues coordinate dimethylallyl diphosphate: Gln-77, Lys-146, Trp-148, Arg-205, and Lys-207. Arg-211 lines the L-tryptophan pocket. Residue Tyr-274 participates in dimethylallyl diphosphate binding. Position 326 (Tyr-326) interacts with L-tryptophan. Arg-337, Lys-339, and Tyr-341 together coordinate dimethylallyl diphosphate. The FtsK domain maps to 346–373; it reads MHDVTPPPLGVSQQHHLSGQTTARGRTE.

Its function is as follows. Dimethylallyltryptophan synthase; part of the gene cluster that mediates the biosynthesis of cyclic heptapeptides, known as cyclomarins and also of cyclic dipeptides, called cyclomarazines, which have both antimicrobial and cytotoxic effects. Catalyzes the reverse N-prenylation of monomeric L-tryptophan with dimethylallyl diphosphate (DMAPP) to form N-(1,1-dimethylallyl)-tryptophan (r-N-DMAT). The formation of r-N-DMAT appears to proceed via the deprotonation of the indole nitrogen of tryptophan, which facilitates a nucleophilic attack on the carbocation that is forming on the dimethylallyl group as the diphosphate dissociates. The N-(1,1-dimethylallyl)-tryptophan produced by CymD is combined with a range of standard and nonproteinogenic amino acid substrates to synthesize the peptides, a process that is probably catalyzed by the non-canonical nonribosomal peptide synthetase (NRPS), CymA. Other proteins in the cluster catalyze further modifications of the peptides including CymV which catalyzes the oxidation of olefinic cyclomarins and cyclomarazines to their respective epoxide derivatives. Utilizes only DMAPP as the prenyl donor and has no requirement for divalent cations. The chain is Dimethylallyltryptophan synthase CymD from Salinispora arenicola (strain CNS-205).